The primary structure comprises 269 residues: Peptide deformylase 1B, chloroplastic (269 aa).

Residues methionine 1–phenylalanine 51 constitute a chloroplast transit peptide. Cysteine 168 and histidine 210 together coordinate Fe cation. Residue glutamate 211 is part of the active site. Histidine 214 provides a ligand contact to Fe cation.

It belongs to the polypeptide deformylase family. In terms of assembly, homodimer. The cofactor is Fe(2+). Mainly expressed in mature leaves and sheaths.

The protein resides in the plastid. Its subcellular location is the chloroplast stroma. The protein localises to the mitochondrion. It carries out the reaction N-terminal N-formyl-L-methionyl-[peptide] + H2O = N-terminal L-methionyl-[peptide] + formate. Inhibited by actinonin. Functionally, removes the formyl group from the N-terminal Met of newly synthesized proteins. This chain is Peptide deformylase 1B, chloroplastic (PDF1B), found in Oryza sativa subsp. japonica (Rice).